Here is a 510-residue protein sequence, read N- to C-terminus: Nectin-4 (510 aa).

Residues 1 to 31 (MPLSLGAEMWGPAAWLLLLLLLASFTGQRLA) form the signal peptide. One can recognise an Ig-like V-type domain in the interval 32–144 (GELETSDLVT…GSFQARLRLR (113 aa)). At 32 to 349 (GELETSDLVT…GKQVDLVSAS (318 aa)) the chain is on the extracellular side. 3 disulfide bridges follow: C52–C127, C171–C223, and C270–C315. Ig-like C2-type domains lie at 148–237 (PPLP…QRIT) and 248–331 (ASVR…VVVD). An N-linked (GlcNAc...) asparagine glycan is attached at N281. The helical transmembrane segment at 350-370 (VVVVGVIAALLFCLLVVVVVL) threads the bilayer. Residues 371-510 (MSRYHRRKAQ…IYINGRGHLV (140 aa)) are Cytoplasmic-facing. Over residues 400–412 (RLHSHHSDPRNQP) the composition is skewed to basic and acidic residues. The disordered stretch occupies residues 400-475 (RLHSHHSDPR…GRAEEEEDRD (76 aa)).

Belongs to the nectin family. In terms of assembly, self-associates. Interacts via its Ig-like V-type domain with NECTIN1 Ig-like V-type domain. Interacts via its C-terminus with AFDN. Interacts with TIGIT.

The protein resides in the cell membrane. The protein localises to the cell junction. It is found in the adherens junction. Functionally, seems to be involved in cell adhesion through trans-homophilic and -heterophilic interactions, the latter including specifically interactions with NECTIN1. Plays a role in the senescence-associated cell size enlargement via SFK/PI3K/Rac1 and thus promotes senescent cell survival. Also participates in the innate immune response by acting as a ligand for the receptor TIGIT to inhibit NK-cell activity. In Bos taurus (Bovine), this protein is Nectin-4.